We begin with the raw amino-acid sequence, 338 residues long: Anthranilate phosphoribosyltransferase (338 aa).

5-phospho-alpha-D-ribose 1-diphosphate-binding positions include Gly-81, 84-85 (GD), Thr-89, 91-94 (NIST), 109-117 (KHGNRNLSS), and Ala-121. Gly-81 serves as a coordination point for anthranilate. Mg(2+) is bound at residue Ser-93. An anthranilate-binding site is contributed by Asn-112. Anthranilate is bound at residue Arg-167. The Mg(2+) site is built by Asp-226 and Glu-227.

It belongs to the anthranilate phosphoribosyltransferase family. Homodimer. Mg(2+) serves as cofactor.

The catalysed reaction is N-(5-phospho-beta-D-ribosyl)anthranilate + diphosphate = 5-phospho-alpha-D-ribose 1-diphosphate + anthranilate. Its pathway is amino-acid biosynthesis; L-tryptophan biosynthesis; L-tryptophan from chorismate: step 2/5. Functionally, catalyzes the transfer of the phosphoribosyl group of 5-phosphorylribose-1-pyrophosphate (PRPP) to anthranilate to yield N-(5'-phosphoribosyl)-anthranilate (PRA). The polypeptide is Anthranilate phosphoribosyltransferase (Cereibacter sphaeroides (strain ATCC 17029 / ATH 2.4.9) (Rhodobacter sphaeroides)).